The chain runs to 118 residues: Ribonuclease P protein component (118 aa).

It belongs to the RnpA family. Consists of a catalytic RNA component (M1 or rnpB) and a protein subunit.

The catalysed reaction is Endonucleolytic cleavage of RNA, removing 5'-extranucleotides from tRNA precursor.. RNaseP catalyzes the removal of the 5'-leader sequence from pre-tRNA to produce the mature 5'-terminus. It can also cleave other RNA substrates such as 4.5S RNA. The protein component plays an auxiliary but essential role in vivo by binding to the 5'-leader sequence and broadening the substrate specificity of the ribozyme. In Rickettsia rickettsii (strain Iowa), this protein is Ribonuclease P protein component.